A 346-amino-acid polypeptide reads, in one-letter code: Small ribosomal subunit biogenesis GTPase RsgA 2 (346 aa).

The region spanning 93–248 (EEQLIAANFD…VIDTPGMREF (156 aa)) is the CP-type G domain. Residues 138–141 (TKAD) and 190–198 (GSSGVGKSS) contribute to the GTP site. Zn(2+) is bound by residues Cys271, Cys276, His278, and Cys284.

The protein belongs to the TRAFAC class YlqF/YawG GTPase family. RsgA subfamily. Monomer. Associates with 30S ribosomal subunit, binds 16S rRNA. It depends on Zn(2+) as a cofactor.

It is found in the cytoplasm. One of several proteins that assist in the late maturation steps of the functional core of the 30S ribosomal subunit. Helps release RbfA from mature subunits. May play a role in the assembly of ribosomal proteins into the subunit. Circularly permuted GTPase that catalyzes slow GTP hydrolysis, GTPase activity is stimulated by the 30S ribosomal subunit. The protein is Small ribosomal subunit biogenesis GTPase RsgA 2 of Listeria monocytogenes serotype 4b (strain F2365).